A 107-amino-acid chain; its full sequence is Acidic phospholipase A2 braziliase-I (107 aa).

7 disulfides stabilise this stretch: cysteine 26/cysteine 100, cysteine 28/cysteine 44, cysteine 43/cysteine 86, cysteine 49/cysteine 107, cysteine 50/cysteine 79, cysteine 57/cysteine 72, and cysteine 66/cysteine 77. Residues tyrosine 27, glycine 29, and glycine 31 each contribute to the Ca(2+) site. The active site involves histidine 47. Aspartate 48 contributes to the Ca(2+) binding site. Aspartate 80 is a catalytic residue.

As to quaternary structure, monomer. Ca(2+) serves as cofactor. Expressed by the venom gland.

Its subcellular location is the secreted. The enzyme catalyses a 1,2-diacyl-sn-glycero-3-phosphocholine + H2O = a 1-acyl-sn-glycero-3-phosphocholine + a fatty acid + H(+). In terms of biological role, snake venom phospholipase A2 (PLA2) that induces significant edematogenic activity. Shows mild cytotoxicity on Trypanosoma cruzi and Leishmania infantum. Also inhibits ADP- and collagen-induced platelet aggregation. Does not show myotoxic activity. The chain is Acidic phospholipase A2 braziliase-I from Bothrops brazili (Brazil's lancehead).